Reading from the N-terminus, the 1069-residue chain is Carbamoyl phosphate synthase large chain (1069 aa).

The segment at 1–401 (MPLNKDIKRV…AFLKGIRSLE (401 aa)) is carboxyphosphate synthetic domain. ATP is bound by residues R129, R169, G175, G176, K208, V210, E215, G241, I242, H243, Q284, and E298. The 195-residue stretch at 133–327 (RDMMNRIGEP…IAKLAAKIAL (195 aa)) folds into the ATP-grasp 1 domain. Positions 284, 298, and 300 each coordinate Mg(2+). Positions 284, 298, and 300 each coordinate Mn(2+). Residues 402 to 549 (IGKYSLDHKK…YSTYEQYDEV (148 aa)) are oligomerization domain. Residues 550 to 932 (EVSNRRKVIV…ALYKGFVGAN (383 aa)) are carbamoyl phosphate synthetic domain. The ATP-grasp 2 domain maps to 674-864 (DELLERLDIS…IVDIATQVML (191 aa)). Positions 710, 749, 751, 755, 780, 781, 782, 783, 823, and 835 each coordinate ATP. Mg(2+) is bound by residues Q823, E835, and N837. Residues Q823, E835, and N837 each coordinate Mn(2+). An MGS-like domain is found at 932 to 1069 (NMYPSKEKGK…KDLEVFDITK (138 aa)). The segment at 933-1069 (MYPSKEKGKI…KDLEVFDITK (137 aa)) is allosteric domain.

The protein belongs to the CarB family. In terms of assembly, composed of two chains; the small (or glutamine) chain promotes the hydrolysis of glutamine to ammonia, which is used by the large (or ammonia) chain to synthesize carbamoyl phosphate. Tetramer of heterodimers (alpha,beta)4. The cofactor is Mg(2+). It depends on Mn(2+) as a cofactor.

It carries out the reaction hydrogencarbonate + L-glutamine + 2 ATP + H2O = carbamoyl phosphate + L-glutamate + 2 ADP + phosphate + 2 H(+). The enzyme catalyses hydrogencarbonate + NH4(+) + 2 ATP = carbamoyl phosphate + 2 ADP + phosphate + 2 H(+). It participates in amino-acid biosynthesis; L-arginine biosynthesis; carbamoyl phosphate from bicarbonate: step 1/1. Its pathway is pyrimidine metabolism; UMP biosynthesis via de novo pathway; (S)-dihydroorotate from bicarbonate: step 1/3. Its function is as follows. Large subunit of the glutamine-dependent carbamoyl phosphate synthetase (CPSase). CPSase catalyzes the formation of carbamoyl phosphate from the ammonia moiety of glutamine, carbonate, and phosphate donated by ATP, constituting the first step of 2 biosynthetic pathways, one leading to arginine and/or urea and the other to pyrimidine nucleotides. The large subunit (synthetase) binds the substrates ammonia (free or transferred from glutamine from the small subunit), hydrogencarbonate and ATP and carries out an ATP-coupled ligase reaction, activating hydrogencarbonate by forming carboxy phosphate which reacts with ammonia to form carbamoyl phosphate. This Clostridium botulinum (strain Alaska E43 / Type E3) protein is Carbamoyl phosphate synthase large chain.